Here is a 474-residue protein sequence, read N- to C-terminus: Cysteine protease ATG4A (474 aa).

A disordered region spans residues 1–32 (MTSLPGRGVSPSSSDPLCEGNAAPSSSSSSGQ). Residue C161 is the Nucleophile of the active site. Residues D358 and H360 contribute to the active site. Residues 439-449 (KQMYNEESSSG) are compositionally biased toward polar residues. A disordered region spans residues 439–474 (KQMYNEESSSGDGMDSINVEGLDGSGETGEEEWQIL).

This sequence belongs to the peptidase C54 family. As to quaternary structure, interacts with ATG8.

It is found in the cytoplasm. It carries out the reaction [protein]-C-terminal L-amino acid-glycyl-phosphatidylethanolamide + H2O = [protein]-C-terminal L-amino acid-glycine + a 1,2-diacyl-sn-glycero-3-phosphoethanolamine. In terms of biological role, cysteine protease that plays a key role in autophagy by mediating both proteolytic activation and delipidation of ATG8 family proteins. The protease activity is required for proteolytic activation of ATG8 family proteins: cleaves the C-terminal amino acid of ATG8 proteins to reveal a C-terminal glycine. Exposure of the glycine at the C-terminus is essential for ATG8 proteins conjugation to phosphatidylethanolamine (PE) and insertion to membranes, which is necessary for autophagy. In addition to the protease activity, also mediates delipidation of PE-conjugated ATG8 proteins. The polypeptide is Cysteine protease ATG4A (ATG4A) (Oryza sativa subsp. japonica (Rice)).